The sequence spans 383 residues: 4-hydroxy-3-methylbut-2-en-1-yl diphosphate synthase (flavodoxin) (383 aa).

Residues Cys275, Cys278, Cys310, and Glu317 each contribute to the [4Fe-4S] cluster site.

Belongs to the IspG family. The cofactor is [4Fe-4S] cluster.

It carries out the reaction (2E)-4-hydroxy-3-methylbut-2-enyl diphosphate + oxidized [flavodoxin] + H2O + 2 H(+) = 2-C-methyl-D-erythritol 2,4-cyclic diphosphate + reduced [flavodoxin]. It functions in the pathway isoprenoid biosynthesis; isopentenyl diphosphate biosynthesis via DXP pathway; isopentenyl diphosphate from 1-deoxy-D-xylulose 5-phosphate: step 5/6. Functionally, converts 2C-methyl-D-erythritol 2,4-cyclodiphosphate (ME-2,4cPP) into 1-hydroxy-2-methyl-2-(E)-butenyl 4-diphosphate. The chain is 4-hydroxy-3-methylbut-2-en-1-yl diphosphate synthase (flavodoxin) from Dinoroseobacter shibae (strain DSM 16493 / NCIMB 14021 / DFL 12).